Here is a 223-residue protein sequence, read N- to C-terminus: N-(5'-phosphoribosyl)anthranilate isomerase (223 aa).

This sequence belongs to the TrpF family.

It carries out the reaction N-(5-phospho-beta-D-ribosyl)anthranilate = 1-(2-carboxyphenylamino)-1-deoxy-D-ribulose 5-phosphate. The protein operates within amino-acid biosynthesis; L-tryptophan biosynthesis; L-tryptophan from chorismate: step 3/5. The chain is N-(5'-phosphoribosyl)anthranilate isomerase from Bradyrhizobium diazoefficiens (strain JCM 10833 / BCRC 13528 / IAM 13628 / NBRC 14792 / USDA 110).